Consider the following 354-residue polypeptide: Guanine nucleotide-binding protein G(i) subunit alpha-1 (354 aa).

Glycine 2 carries the N-myristoyl glycine lipid modification. A lipid anchor (S-palmitoyl cysteine) is attached at cysteine 3. The G-alpha domain maps to 32-354; it reads REVKLLLLGA…KNNLKDCGLF (323 aa). Residues 35–48 are G1 motif; it reads KLLLLGAGESGKST. Residues 43–48, 150–151, and 175–178 contribute to the GTP site; these read ESGKST, DS, and LRTR. Serine 47 is a Mg(2+) binding site. Residues 173 to 181 are G2 motif; sequence DVLRTRVKT. Position 181 (threonine 181) interacts with Mg(2+). The segment at 196 to 205 is G3 motif; sequence FKMFDVGGQR. Residues 200–204, 269–272, and alanine 326 contribute to the GTP site; these read DVGGQ and NKKD. Residues 265-272 are G4 motif; the sequence is ILFLNKKD. Residues 324–329 form a G5 motif region; it reads TCATDT.

This sequence belongs to the G-alpha family. G(i/o/t/z) subfamily. Heterotrimeric G proteins are composed of 3 units; alpha, beta and gamma. The alpha chain contains the guanine nucleotide binding site. Part of a spindle orientation complex at least composed of GNAI1, GPSM2 and NUMA1. Identified in complex with the beta subunit GNB1 and the gamma subunit GNG1. Identified in complex with the beta subunit GNB1 and the gamma subunit GNG2. Component of the TAS2R14-GNAI1 complex, consisting of TAS2R14, GNAI1, GNB1 and GNG2; within the complex interacts with TAS2R14; this complex plays a role in the perception of bitterness. GTP binding causes dissociation of the heterotrimer, liberating the individual subunits so that they can interact with downstream effector proteins. Interacts (GDP-bound form) with GPSM1; this inhibits guanine nucleotide exchange and GTP binding. Interacts (GDP-bound form) with GPSM2 (via GoLoco domains); this inhibits guanine nucleotide exchange. Interacts with RGS10; this strongly enhances GTP hydrolysis. Interacts with RGS1 and RGS16; this strongly enhances GTPase activity. Interacts with RGS4. Interacts with RGS12. Interacts (via active GTP- or inactive GDP-bound forms) with RGS14 (via RGS and GoLoco domains). Interacts with RGS3, RGS6, RGS7, RGS8, RGS17, RGS18 and RGS20 (in vitro). Interacts (GDP-bound form) with RIC8A (via C-terminus); promoting GNAI1 folding and association with the plasma membrane. Interacts (inactive GDP-bound form) with NUCB1 (via GBA motif); the interaction leads to activation of GNAI1. Interacts (inactive GDP-bound form) with CCDC88C/DAPLE (via GBA motif); the interaction leads to activation of GNAI1. Interacts (inactive GDP-bound form) with CCDC8A/GIV (via GBA motif). In terms of processing, myristoylation at Gly-2 is required for membrane anchoring before palmitoylation. Post-translationally, palmitoylation at Cys-3 varies with membrane lipid composition. In terms of tissue distribution, mainly expressed in the brain, lung and kidney.

It localises to the nucleus. The protein resides in the cytoplasm. The protein localises to the cell membrane. Its subcellular location is the cytoskeleton. It is found in the microtubule organizing center. It localises to the centrosome. The protein resides in the cell cortex. The protein localises to the membrane. It catalyses the reaction GTP + H2O = GDP + phosphate + H(+). Functionally, guanine nucleotide-binding proteins (G proteins) function as transducers downstream of G protein-coupled receptors (GPCRs) in numerous signaling cascades. The alpha chain contains the guanine nucleotide binding site and alternates between an active, GTP-bound state and an inactive, GDP-bound state. Signaling by an activated GPCR promotes GDP release and GTP binding. The alpha subunit has a low GTPase activity that converts bound GTP to GDP, thereby terminating the signal. Both GDP release and GTP hydrolysis are modulated by numerous regulatory proteins. Signaling is mediated via effector proteins, such as adenylate cyclase. Inhibits adenylate cyclase activity of ADCY1, ADCY5 and ADCY6, leading to decreased intracellular cAMP levels. The inactive GDP-bound form prevents the association of RGS14 with centrosomes and is required for the translocation of RGS14 from the cytoplasm to the plasma membrane. Required for normal cytokinesis during mitosis. Required for cortical dynein-dynactin complex recruitment during metaphase. The chain is Guanine nucleotide-binding protein G(i) subunit alpha-1 (GNAI1) from Cavia porcellus (Guinea pig).